Here is a 184-residue protein sequence, read N- to C-terminus: Holliday junction branch migration complex subunit RuvA (184 aa).

Positions 1-64 are domain I; it reads MIRAIEGIIT…EDANLLYGFL (64 aa). Positions 65–144 are domain II; it reads DTNEQKMFEM…SDESVPGYQN (80 aa). Position 144 (asparagine 144) is a region of interest, flexible linker. The tract at residues 144–184 is domain III; sequence NEALLALEALGFKREKIVKILPDLKSTSTSELVKEALKKLA.

The protein belongs to the RuvA family. As to quaternary structure, homotetramer. Forms an RuvA(8)-RuvB(12)-Holliday junction (HJ) complex. HJ DNA is sandwiched between 2 RuvA tetramers; dsDNA enters through RuvA and exits via RuvB. An RuvB hexamer assembles on each DNA strand where it exits the tetramer. Each RuvB hexamer is contacted by two RuvA subunits (via domain III) on 2 adjacent RuvB subunits; this complex drives branch migration. In the full resolvosome a probable DNA-RuvA(4)-RuvB(12)-RuvC(2) complex forms which resolves the HJ.

It localises to the cytoplasm. The RuvA-RuvB-RuvC complex processes Holliday junction (HJ) DNA during genetic recombination and DNA repair, while the RuvA-RuvB complex plays an important role in the rescue of blocked DNA replication forks via replication fork reversal (RFR). RuvA specifically binds to HJ cruciform DNA, conferring on it an open structure. The RuvB hexamer acts as an ATP-dependent pump, pulling dsDNA into and through the RuvAB complex. HJ branch migration allows RuvC to scan DNA until it finds its consensus sequence, where it cleaves and resolves the cruciform DNA. The protein is Holliday junction branch migration complex subunit RuvA of Campylobacter curvus (strain 525.92).